A 2286-amino-acid polypeptide reads, in one-letter code: Non-reducing polyketide synthase fsr1 (2286 aa).

Residues 7–342 (LYLFGDQTFD…IYTALKKTSL (336 aa)) are N-terminal acylcarrier protein transacylase domain (SAT). A Ketosynthase family 3 (KS3) domain is found at 368–805 (KPKLAIVAMS…GGNSALLIQD (438 aa)). Catalysis depends on for beta-ketoacyl synthase activity residues Cys540, His675, and His722. Residues 905 to 1195 (VFTFTGQGAQ…GMVKPTLGQQ (291 aa)) form an acyl/malonyl transferases region. Ser996 (for acyl/malonyl transferase activity) is an active-site residue. The tract at residues 1285-1417 (HSVVEESGDS…CVVLFKDRSH (133 aa)) is N-terminal hotdog fold. A PKS/mFAS DH domain is found at 1285 to 1591 (HSVVEESGDS…IQGVPRRVLK (307 aa)). The tract at residues 1296-1588 (KTGIVVEADI…QIAIQGVPRR (293 aa)) is product template (PT) domainn. The active-site Proton acceptor; for dehydratase activity is the His1317. The interval 1444–1591 (SARFNRPMAY…IQGVPRRVLK (148 aa)) is C-terminal hotdog fold. The active-site Proton donor; for dehydratase activity is Asp1504. The tract at residues 1600 to 1639 (KKGQPQRQTQDKPRNTPSQTKDSTPKPAQNKPAAKVEPPK) is disordered. A Carrier 1 domain is found at 1637–1712 (PPKFSTAIRI…DLRAFLGADE (76 aa)). At Ser1671 the chain carries O-(pantetheine 4'-phosphoryl)serine. Positions 1716 to 1735 (ESSSSAASDSGRDTTTTGSA) are disordered. Residues 1748-1823 (EVEFERALEI…DLKTMLAREM (76 aa)) form the Carrier 2 domain. Ser1782 bears the O-(pantetheine 4'-phosphoryl)serine mark. The segment at 1897–2145 (VTGASGGLGS…NWTPVNDIAD (249 aa)) is reductase (R) domain.

It functions in the pathway polyketide biosynthesis. Functionally, non-reducing polyketide synthase; part of the gene cluster that mediates the biosynthesis of fusarubins, highly pigmented naphthoquinones responsible for the coloration of the fruiting bodies. The non-reducing polyketide synthase FSR1 is responsible for the condensation of seven acetyl-CoA units to yield a haptaketide. After rings A and B are formed by aldol-type cyclization, the PKS-derived product is released as 6-O-demethylfusarubinaldehyde. Then, two hydroxyl groups at C-5 and C-10 are incorporated by FSR3, and simultaneously hydroxyl groups at C-6 and C-8 are methylated by FSR2. The aldehyde is, on the one hand, reduced by FSR3 to 8-O-methylfusarubin alcohol, which equilibrates mainly with 8-O-methylfusarubin and only small amounts of 8-O-methylnectriafurone. On the other hand, the aldehyde can be oxidized to form 8-O-methylfusarubinic acid, a reaction driven by FSR3 equilibrating with 8-O-methylfusarubinlactone, finally resulting in 8-O-methylanhydrofusarubinlactol after a further reduction step and loss of water. 8-O-Methylfusarubinic acid can also undergo decarboxylation, resulting in 8-O-methyl-13-hydroxynorjavanicin after another hydroxylation step at C-13. Both steps are most likely also accomplished by FSR3. No enzymatic function has been determined so far for either FSR4 and FSR5. Their deletion does not alter the product spectrum, but the possibility that they catalyze specific enzymatic steps during perithecium development cannot be ruled out. FSR4 might possess a regulatory function in the biosynthesis of fusarubins. In Gibberella fujikuroi (strain CBS 195.34 / IMI 58289 / NRRL A-6831) (Bakanae and foot rot disease fungus), this protein is Non-reducing polyketide synthase fsr1.